The sequence spans 194 residues: FMN-dependent NADH:quinone oxidoreductase (194 aa).

Residues Ser10 and 90–93 (MYNL) each bind FMN.

The protein belongs to the azoreductase type 1 family. Homodimer. Requires FMN as cofactor.

The enzyme catalyses 2 a quinone + NADH + H(+) = 2 a 1,4-benzosemiquinone + NAD(+). It carries out the reaction N,N-dimethyl-1,4-phenylenediamine + anthranilate + 2 NAD(+) = 2-(4-dimethylaminophenyl)diazenylbenzoate + 2 NADH + 2 H(+). Its function is as follows. Quinone reductase that provides resistance to thiol-specific stress caused by electrophilic quinones. Functionally, also exhibits azoreductase activity. Catalyzes the reductive cleavage of the azo bond in aromatic azo compounds to the corresponding amines. This Haemophilus influenzae (strain ATCC 51907 / DSM 11121 / KW20 / Rd) protein is FMN-dependent NADH:quinone oxidoreductase.